Consider the following 119-residue polypeptide: uncharacterized protein (119 aa).

This is an uncharacterized protein from Shigella flexneri.